Here is a 977-residue protein sequence, read N- to C-terminus: MAPSLRNFNFFHRFSTFLVFSLFSVVSSDDLQVLLKLKSSFADSNLAVFDSWKLNSGIGPCSFIGVTCNSRGNVTEIDLSRRGLSGNFPFDSVCEIQSLEKLSLGFNSLSGIIPSDLKNCTSLKYLDLGNNLFSGAFPEFSSLNQLQFLYLNNSAFSGVFPWKSLRNATSLVVLSLGDNPFDATADFPVEVVSLKKLSWLYLSNCSIAGKIPPAIGDLTELRNLEISDSGLTGEIPSEISKLTNLWQLELYNNSLTGKLPTGFGNLKNLTYLDASTNLLQGDLSELRSLTNLVSLQMFENEFSGEIPLEFGEFKDLVNLSLYTNKLTGSLPQGLGSLADFDFIDASENLLTGPIPPDMCKNGKMKALLLLQNNLTGSIPESYANCLTLQRFRVSENNLNGTVPAGLWGLPKLEIIDIEMNNFEGPITADIKNGKMLGALYLGFNKLSDELPEEIGDTESLTKVELNNNRFTGKIPSSIGKLKGLSSLKMQSNGFSGEIPDSIGSCSMLSDVNMAQNSISGEIPHTLGSLPTLNALNLSDNKLSGRIPESLSSLRLSLLDLSNNRLSGRIPLSLSSYNGSFNGNPGLCSTTIKSFNRCINPSRSHGDTRVFVLCIVFGLLILLASLVFFLYLKKTEKKEGRSLKHESWSIKSFRKMSFTEDDIIDSIKEENLIGRGGCGDVYRVVLGDGKEVAVKHIRCSSTQKNFSSAMPILTEREGRSKEFETEVQTLSSIRHLNVVKLYCSITSDDSSLLVYEYLPNGSLWDMLHSCKKSNLGWETRYDIALGAAKGLEYLHHGYERPVIHRDVKSSNILLDEFLKPRIADFGLAKILQASNGGPESTHVVAGTYGYIAPAEYGYASKVTEKCDVYSFGVVLMELVTGKKPIEAEFGESKDIVNWVSNNLKSKESVMEIVDKKIGEMYREDAVKMLRIAIICTARLPGLRPTMRSVVQMIEDAEPCRLMGIVISKESDVKVKEIS.

The N-terminal stretch at 1–28 (MAPSLRNFNFFHRFSTFLVFSLFSVVSS) is a signal peptide. Over 29–608 (DDLQVLLKLK…NPSRSHGDTR (580 aa)) the chain is Extracellular. LRR repeat units lie at residues 71 to 95 (RGNV…SVCE), 96 to 119 (IQSL…DLKN), and 121 to 145 (TSLK…SLNQ). N73 and N119 each carry an N-linked (GlcNAc...) asparagine glycan. N152 and N167 each carry an N-linked (GlcNAc...) asparagine glycan. LRR repeat units follow at residues 168-194 (ATSL…VVSL), 195-218 (KKLS…IGDL), 219-242 (TELR…ISKL), 244-265 (NLWQ…GFGN), 267-289 (KNLT…LRSL), 290-312 (TNLV…EFGE), 313-337 (FKDL…LGSL), 339-361 (DFDF…MCKN), 362-385 (GKMK…YANC), 386-409 (LTLQ…LWGL), 411-433 (KLEI…IKNG), 434-457 (KMLG…IGDT), 458-481 (ESLT…IGKL), 482-505 (KGLS…IGSC), 507-529 (MLSD…LGSL), 530-553 (PTLN…LSSL), and 555-578 (LSLL…SYNG). N-linked (GlcNAc...) asparagine glycosylation occurs at N204. 2 N-linked (GlcNAc...) asparagine glycosylation sites follow: N252 and N268. An N-linked (GlcNAc...) asparagine glycan is attached at N318. 2 N-linked (GlcNAc...) asparagine glycosylation sites follow: N373 and N399. N536 and N577 each carry an N-linked (GlcNAc...) asparagine glycan. The chain crosses the membrane as a helical span at residues 609–629 (VFVLCIVFGLLILLASLVFFL). The Cytoplasmic segment spans residues 630-977 (YLKKTEKKEG…ESDVKVKEIS (348 aa)). Residues 666-959 (IKEENLIGRG…QMIEDAEPCR (294 aa)) enclose the Protein kinase domain. Residues 672-680 (IGRGGCGDV) and K694 contribute to the ATP site. D805 serves as the catalytic Proton acceptor.

It belongs to the protein kinase superfamily. Ser/Thr protein kinase family. In terms of assembly, interacts with PIP1. Expressed in roots, stems and dry seeds. Expressed at junctions between organs, such as the insertion zones of stamens, petals and sepals, the transition zones of floral stem and pedicel, pedicel and silique, and floral stem and cauline leaves.

The protein resides in the membrane. It carries out the reaction L-seryl-[protein] + ATP = O-phospho-L-seryl-[protein] + ADP + H(+). The catalysed reaction is L-threonyl-[protein] + ATP = O-phospho-L-threonyl-[protein] + ADP + H(+). Functionally, plays a role in pattern-triggered immunity (PTI) signaling induced by pathogen-associated molecular patterns (PAMPs). Acts as a receptor for PIP1 defense peptide. PIP1 is an endogenous secreted peptide that acts as elicitor of immune response and positive regulator of defense response. Involved in the control of seed germination speed, in tolerance to oxidative stress and in maintaining seed longevity. In Arabidopsis thaliana (Mouse-ear cress), this protein is Receptor-like protein kinase 7.